Reading from the N-terminus, the 1037-residue chain is Probable aminoglycoside efflux pump (1037 aa).

At 1–9 the chain is on the cytoplasmic side; that stretch reads MANFFIDRP. Residues 10–28 form a helical membrane-spanning segment; it reads IFAWVLAILLCLTGTLAIF. At 29-339 the chain is on the periplasmic side; the sequence is SLPVEQYPDL…TSFVKASIED (311 aa). A helical transmembrane segment spans residues 340–359; it reads VVKTLLEAIALVFLVMYLFL. The Cytoplasmic portion of the chain corresponds to 360–365; sequence QNFRAT. A helical membrane pass occupies residues 366–385; that stretch reads LIPTIAVPVVLMGTFSVLYA. Topologically, residues 386-391 are periplasmic; the sequence is FGYSVN. A helical transmembrane segment spans residues 392–413; sequence TLTMFAMVLAIGLLVDDAIVVV. Residues 414–441 are Cytoplasmic-facing; sequence ENVERIMSEEGLTPREATRKSMGQIQGA. The helical transmembrane segment at 442 to 460 threads the bilayer; that stretch reads LVGIAMVLSAVFVPMAFFG. Residues 461 to 473 are Periplasmic-facing; the sequence is GTTGAIYRQFSIT. Residues 474 to 496 traverse the membrane as a helical segment; sequence IVAAMVLSVLVAMILTPALCATL. Residues 497–537 lie on the Cytoplasmic side of the membrane; it reads LKPLKKGEHHGQKGFFAWFNQMFNRNAERYEKGVAKILHRS. The chain crosses the membrane as a helical span at residues 538-556; sequence LRWIVIYVLLLGGMVFLFL. Topologically, residues 557-870 are periplasmic; the sequence is RLPTSFLPLE…SYQERLSGAQ (314 aa). A helical membrane pass occupies residues 871 to 890; that stretch reads APALYAISLLVVFLCLAALY. Topologically, residues 891-896 are cytoplasmic; the sequence is ESWSVP. The helical transmembrane segment at 897–916 threads the bilayer; the sequence is FSVMLVVPLGVIGALLATWM. The Periplasmic segment spans residues 917–922; it reads RGLEND. Residues 923 to 944 form a helical membrane-spanning segment; that stretch reads VYFQVGLLTVIGLSAKNAILIV. Residues 945-971 are Cytoplasmic-facing; sequence EFANEMNQKGHDLFEATLHACRQRLRP. Residues 972–990 form a helical membrane-spanning segment; that stretch reads ILMTSLAFIFGVLPMATST. The Periplasmic portion of the chain corresponds to 991–1003; the sequence is GAGSGGQHAVGTG. A helical membrane pass occupies residues 1004–1026; that stretch reads VMGGMISATILAIYFVPLFFVLV. The Cytoplasmic portion of the chain corresponds to 1027–1037; the sequence is RRRFPLKPRPE.

This sequence belongs to the resistance-nodulation-cell division (RND) (TC 2.A.6) family.

The protein resides in the cell inner membrane. In terms of biological role, participates in the efflux of aminoglycosides. Confers resistance to a variety of these substances. The protein is Probable aminoglycoside efflux pump (acrD) of Escherichia coli (strain K12).